Here is a 117-residue protein sequence, read N- to C-terminus: DNA-directed RNA polymerase subunit omega (117 aa).

The protein belongs to the RNA polymerase subunit omega family. In terms of assembly, the RNAP catalytic core consists of 2 alpha, 1 beta, 1 beta' and 1 omega subunit. When a sigma factor is associated with the core the holoenzyme is formed, which can initiate transcription.

The catalysed reaction is RNA(n) + a ribonucleoside 5'-triphosphate = RNA(n+1) + diphosphate. In terms of biological role, promotes RNA polymerase assembly. Latches the N- and C-terminal regions of the beta' subunit thereby facilitating its interaction with the beta and alpha subunits. This is DNA-directed RNA polymerase subunit omega from Cereibacter sphaeroides (strain ATCC 17029 / ATH 2.4.9) (Rhodobacter sphaeroides).